The primary structure comprises 382 residues: Polyadenylate-binding protein 5 (382 aa).

4 consecutive RRM domains span residues 18 to 96 (AALY…WSQP), 106 to 182 (GNIF…RFKF), 199 to 276 (TNVF…RAQK), and 302 to 378 (VPIY…LGQA).

Its subcellular location is the cytoplasm. Binds the poly(A) tail of mRNA. May be involved in cytoplasmic regulatory processes of mRNA metabolism. Can probably bind to cytoplasmic RNA sequences other than poly(A) in vivo. The polypeptide is Polyadenylate-binding protein 5 (PABPC5) (Macaca mulatta (Rhesus macaque)).